A 419-amino-acid polypeptide reads, in one-letter code: Enolase (419 aa).

Glutamine 161 is a binding site for (2R)-2-phosphoglycerate. The Proton donor role is filled by glutamate 205. The Mg(2+) site is built by aspartate 240, glutamate 283, and aspartate 309. (2R)-2-phosphoglycerate-binding residues include lysine 334, arginine 363, serine 364, and lysine 385. Lysine 334 acts as the Proton acceptor in catalysis.

Belongs to the enolase family. The cofactor is Mg(2+).

Its subcellular location is the cytoplasm. The protein localises to the secreted. The protein resides in the cell surface. It catalyses the reaction (2R)-2-phosphoglycerate = phosphoenolpyruvate + H2O. It functions in the pathway carbohydrate degradation; glycolysis; pyruvate from D-glyceraldehyde 3-phosphate: step 4/5. Functionally, catalyzes the reversible conversion of 2-phosphoglycerate (2-PG) into phosphoenolpyruvate (PEP). It is essential for the degradation of carbohydrates via glycolysis. The protein is Enolase of Saccharolobus islandicus (strain M.16.27) (Sulfolobus islandicus).